The chain runs to 358 residues: Heme A synthase (358 aa).

Transmembrane regions (helical) follow at residues 22-42 (IQVW…VGGA), 107-127 (VLGR…WATK), 133-153 (ILFP…IGWW), 172-192 (LAFH…LSRG), 208-228 (FAAW…LVAG), 269-289 (FIHR…AFYV), 302-322 (AFLI…TLLH), and 324-344 (VPIS…CFAV). His271 contacts heme. His332 provides a ligand contact to heme.

This sequence belongs to the COX15/CtaA family. Type 2 subfamily. In terms of assembly, interacts with CtaB. Heme b serves as cofactor.

The protein resides in the cell membrane. The enzyme catalyses Fe(II)-heme o + 2 A + H2O = Fe(II)-heme a + 2 AH2. The protein operates within porphyrin-containing compound metabolism; heme A biosynthesis; heme A from heme O: step 1/1. In terms of biological role, catalyzes the conversion of heme O to heme A by two successive hydroxylations of the methyl group at C8. The first hydroxylation forms heme I, the second hydroxylation results in an unstable dihydroxymethyl group, which spontaneously dehydrates, resulting in the formyl group of heme A. The polypeptide is Heme A synthase (Bartonella tribocorum (strain CIP 105476 / IBS 506)).